The following is a 3263-amino-acid chain: Protein unc-80 (3263 aa).

7 disordered regions span residues 491–527 (KSAL…LDEG), 627–666 (NDTE…SNPS), 939–1010 (PTTS…DDGV), 1042–1076 (DEEI…QVKA), 1380–1475 (SRQS…RMRA), 1633–1660 (LRKQ…RESA), and 1680–1721 (MQQE…LPEK). Residues 499–508 (NENRRTDHQR) are compositionally biased toward basic and acidic residues. Residues 509-519 (MPSTQKSVSGS) show a composition bias toward polar residues. The segment covering 644 to 658 (TTNSRRSSLNTLSRR) has biased composition (low complexity). 2 stretches are compositionally biased toward polar residues: residues 956-967 (GAQSQKQSNDQA) and 981-1005 (SGGT…TVSS). Residues 1042-1055 (DEEISDNENEEGTS) show a composition bias toward acidic residues. The span at 1393–1402 (QGSTKSTTYV) shows a compositional bias: polar residues. Basic residues predominate over residues 1435–1447 (HKRKSFRNRKQSK). Polar residues-rich tracts occupy residues 1460–1469 (GSLTSQQSPI) and 1633–1653 (LRKQ…QSTA). The segment covering 1680–1710 (MQQEKEKEKEKEKEEKDALKKQSVEQDHSST) has biased composition (basic and acidic residues). 5 consecutive transmembrane segments (helical) span residues 2088–2108 (AIGM…GLYF), 2318–2338 (AFMF…MIMH), 2352–2372 (YISI…FLIM), 2953–2973 (AIYL…APMW), and 2995–3015 (AFVD…LPMI). Disordered regions lie at residues 3078-3166 (YTPT…RTRS) and 3178-3198 (RKSR…SVEL). Acidic residues predominate over residues 3124–3135 (IPEDPEDSEDVI). Positions 3138–3166 (NSTGQVTSRISKSPSIPLNKTHQSSRTRS) are enriched in polar residues.

This sequence belongs to the unc-80 family. Expressed in the nervous system. Expressed in both acetylcholine and GABA motor neurons.

The protein localises to the membrane. Functionally, probable component of the nca-1 sodium channel complex, a cation channel that regulates neuronal activity by transmitting depolarization signals to synapses. Regulates the transition from slow to rapid forms of locomotion. Required for localization of nca-1 along axons and in non-synaptic regions. Contributes to endocytosis defects in synaptojanin mutants. Involved in the control of anasthetic response to halothane. The polypeptide is Protein unc-80 (unc-80) (Caenorhabditis elegans).